The primary structure comprises 365 residues: MDFLNSSDQNLTSEELLNRMPSKILVSLTLSGLALMTTTINSLVIAAIIVTRKLHHPANYLICSLAVTDFLVAVLVMPFSIVYIVRESWIMGQVVCDIWLSVDITCCTCSILHLSAIALDRYRAITDAVEYARKRTPKHAGIMITIVWIISVFISMPPLFWRHQGTSRDDECIIKHDHIVSTIYSTFGAFYIPLALILILYYKIYRAAKTLYHKRQASRIAKEEVNGQVLLESGEKSTKSVSTSYVLEKSLSDPSTDFDKIHSTVRSLRSEFKHEKSWRRQKISGTRERKAATTLGLILGAFVICWLPFFVKELVVNVCDKCKISEEMSNFLAWLGYLNSLINPLIYTIFNEDFKKAFQKLVRCR.

The Extracellular portion of the chain corresponds to 1 to 24 (MDFLNSSDQNLTSEELLNRMPSKI). 2 N-linked (GlcNAc...) asparagine glycosylation sites follow: N5 and N10. Residues 25-49 (LVSLTLSGLALMTTTINSLVIAAII) form a helical membrane-spanning segment. The Cytoplasmic segment spans residues 50 to 59 (VTRKLHHPAN). The chain crosses the membrane as a helical span at residues 60-81 (YLICSLAVTDFLVAVLVMPFSI). The Extracellular portion of the chain corresponds to 82–96 (VYIVRESWIMGQVVC). Cysteines 96 and 172 form a disulfide. A helical membrane pass occupies residues 97 to 119 (DIWLSVDITCCTCSILHLSAIAL). Serotonin-binding residues include D103 and C107. A DRY motif; important for ligand-induced conformation changes motif is present at residues 120–122 (DRY). Over 120 to 139 (DRYRAITDAVEYARKRTPKH) the chain is Cytoplasmic. The helical transmembrane segment at 140–159 (AGIMITIVWIISVFISMPPL) threads the bilayer. Topologically, residues 160–178 (FWRHQGTSRDDECIIKHDH) are extracellular. A helical transmembrane segment spans residues 179–202 (IVSTIYSTFGAFYIPLALILILYY). Residues 203-291 (KIYRAAKTLY…KISGTRERKA (89 aa)) lie on the Cytoplasmic side of the membrane. Residues 292–315 (ATTLGLILGAFVICWLPFFVKELV) traverse the membrane as a helical segment. Residues 316–327 (VNVCDKCKISEE) lie on the Extracellular side of the membrane. The helical transmembrane segment at 328 to 350 (MSNFLAWLGYLNSLINPLIYTIF) threads the bilayer. Residues 343 to 347 (NPLIY) carry the NPxxY motif; important for ligand-induced conformation changes and signaling motif. At 351-365 (NEDFKKAFQKLVRCR) the chain is on the cytoplasmic side.

Belongs to the G-protein coupled receptor 1 family.

It is found in the cell membrane. Its function is as follows. G-protein coupled receptor for 5-hydroxytryptamine (serotonin). Also functions as a receptor for various alkaloids and psychoactive substances. Ligand binding causes a conformation change that triggers signaling via guanine nucleotide-binding proteins (G proteins) and modulates the activity of downstream effectors, such as adenylate cyclase. HTR1F is coupled to G(i)/G(o) G alpha proteins and mediates inhibitory neurotransmission by inhibiting adenylate cyclase activity. The protein is 5-hydroxytryptamine receptor 1F (HTR1F) of Pan troglodytes (Chimpanzee).